The sequence spans 327 residues: Spermidine/putrescine import ATP-binding protein PotA (327 aa).

The 231-residue stretch at 5–235 folds into the ABC transporter domain; that stretch reads IKVEAVEKHF…PKTLFVATFI (231 aa). Position 37–44 (37–44) interacts with ATP; sequence GPSGCGKT.

Belongs to the ABC transporter superfamily. Spermidine/putrescine importer (TC 3.A.1.11.1) family. The complex is composed of two ATP-binding proteins (PotA), two transmembrane proteins (PotB and PotC) and a solute-binding protein (PotD).

It localises to the cell membrane. The enzyme catalyses ATP + H2O + polyamine-[polyamine-binding protein]Side 1 = ADP + phosphate + polyamineSide 2 + [polyamine-binding protein]Side 1.. In terms of biological role, part of the ABC transporter complex PotABCD involved in spermidine/putrescine import. Responsible for energy coupling to the transport system. The chain is Spermidine/putrescine import ATP-binding protein PotA from Bacillus thuringiensis subsp. konkukian (strain 97-27).